The sequence spans 271 residues: Shikimate kinase (271 aa).

Residue 83–93 (PIAMGLKSSSA) coordinates ATP.

This sequence belongs to the GHMP kinase family. Archaeal shikimate kinase subfamily.

The protein resides in the cytoplasm. The catalysed reaction is shikimate + ATP = 3-phosphoshikimate + ADP + H(+). It functions in the pathway metabolic intermediate biosynthesis; chorismate biosynthesis; chorismate from D-erythrose 4-phosphate and phosphoenolpyruvate: step 5/7. The protein is Shikimate kinase of Thermococcus kodakarensis (strain ATCC BAA-918 / JCM 12380 / KOD1) (Pyrococcus kodakaraensis (strain KOD1)).